The following is a 269-amino-acid chain: MAASGGQKSEKLDEAQALARSCAGRPDFLPCDGLSICATHSHGKCFKLHWCCHLGWCHCKYVYQPMTSVCQLPSTAVPVAPSGHTHTMNLSISLAERFLRTAPKFQAPPCPESPKFCVISDLFVDDYMVKRINGKMCYVQRPPPPTPNPTHQPQTAAPQPVPQRSKNSHQVGPTVKQGQAKEKISAPKMDHCSSPSSSEDSGINALGLHYMESCDEDSCVDDDDEEEEDDELSTDGNSSPGSFWDQDECTLLSPSKSIVEIIEKIETTV.

Disordered stretches follow at residues 139–203 (VQRP…DSGI) and 215–249 (DEDSCVDDDDEEEEDDELSTDGNSSPGSFWDQDEC). Positions 141–150 (RPPPPTPNPT) are enriched in pro residues. Low complexity predominate over residues 151 to 164 (HQPQTAAPQPVPQR). A compositionally biased stretch (basic and acidic residues) spans 179–191 (QAKEKISAPKMDH). Residues 215–233 (DEDSCVDDDDEEEEDDELS) show a composition bias toward acidic residues.

The protein belongs to the UPF0524 family.

Plays a role in neuronal and neurobehavioral development. Required for normal expression of neuronal markers elavl3 and eno2 and neurobehaviors related to circadian rhythm and changes in light-dark conditions. The chain is UPF0524 protein C3orf70 homolog A from Danio rerio (Zebrafish).